We begin with the raw amino-acid sequence, 297 residues long: tRNA dimethylallyltransferase (297 aa).

Residue 15–22 (GPTASGKS) participates in ATP binding. 17 to 22 (TASGKS) is a substrate binding site. Interaction with substrate tRNA stretches follow at residues 40–43 (DSMQ) and 164–168 (QRIVR).

It belongs to the IPP transferase family. As to quaternary structure, monomer. Mg(2+) is required as a cofactor.

It catalyses the reaction adenosine(37) in tRNA + dimethylallyl diphosphate = N(6)-dimethylallyladenosine(37) in tRNA + diphosphate. Functionally, catalyzes the transfer of a dimethylallyl group onto the adenine at position 37 in tRNAs that read codons beginning with uridine, leading to the formation of N6-(dimethylallyl)adenosine (i(6)A). The protein is tRNA dimethylallyltransferase of Rhizobium etli (strain CIAT 652).